A 262-amino-acid chain; its full sequence is Succinate dehydrogenase [ubiquinone] iron-sulfur subunit (262 aa).

Positions 21-110 (KLIKIFRWDS…NNIIYVYPLP (90 aa)) constitute a 2Fe-2S ferredoxin-type domain. [2Fe-2S] cluster is bound by residues Cys-73, Cys-78, Cys-81, and Cys-93. In terms of domain architecture, 4Fe-4S ferredoxin-type spans 154-184 (DRLYLDGLYECILCACCSASCPSYWWNHDKY). Cys-164, Cys-167, and Cys-170 together coordinate [4Fe-4S] cluster. Cys-174 contributes to the [3Fe-4S] cluster binding site. Position 179 (Trp-179) interacts with a ubiquinone. Cys-221 and Cys-227 together coordinate [3Fe-4S] cluster. Residue Cys-231 participates in [4Fe-4S] cluster binding.

It belongs to the succinate dehydrogenase/fumarate reductase iron-sulfur protein family. In terms of assembly, component of complex II composed of four subunits: a flavoprotein (FP), an iron-sulfur protein (IP), and a cytochrome b composed of a large and a small subunit. Requires [2Fe-2S] cluster as cofactor. [3Fe-4S] cluster is required as a cofactor. The cofactor is [4Fe-4S] cluster.

Its subcellular location is the mitochondrion inner membrane. The enzyme catalyses a quinone + succinate = fumarate + a quinol. Its pathway is carbohydrate metabolism; tricarboxylic acid cycle; fumarate from succinate (eukaryal route): step 1/1. Functionally, iron-sulfur protein (IP) subunit of succinate dehydrogenase (SDH) that is involved in complex II of the mitochondrial electron transport chain and is responsible for transferring electrons from succinate to ubiquinone (coenzyme Q). The chain is Succinate dehydrogenase [ubiquinone] iron-sulfur subunit (SDH2) from Cyanidium caldarium (Red alga).